The following is a 208-amino-acid chain: uncharacterized protein (208 aa).

A compositionally biased stretch (basic and acidic residues) spans 1-18; it reads MSPTKDSHPSPHFPRDSG. Disordered stretches follow at residues 1 to 122 and 135 to 208; these read MSPT…LPPP and RECH…TPDG.

This is an uncharacterized protein from Homo sapiens (Human).